A 144-amino-acid polypeptide reads, in one-letter code: Putative pre-16S rRNA nuclease (144 aa).

Belongs to the YqgF nuclease family.

Its subcellular location is the cytoplasm. Could be a nuclease involved in processing of the 5'-end of pre-16S rRNA. In Chlorobium phaeobacteroides (strain BS1), this protein is Putative pre-16S rRNA nuclease.